The primary structure comprises 97 residues: Large ribosomal subunit protein uL23 (97 aa).

The protein belongs to the universal ribosomal protein uL23 family. Part of the 50S ribosomal subunit. Contacts protein L29, and trigger factor when it is bound to the ribosome.

One of the early assembly proteins it binds 23S rRNA. One of the proteins that surrounds the polypeptide exit tunnel on the outside of the ribosome. Forms the main docking site for trigger factor binding to the ribosome. The sequence is that of Large ribosomal subunit protein uL23 from Acidithiobacillus ferrooxidans (strain ATCC 23270 / DSM 14882 / CIP 104768 / NCIMB 8455) (Ferrobacillus ferrooxidans (strain ATCC 23270)).